The sequence spans 44 residues: U2-agatoxin-Ao1s (44 aa).

Residues 1 to 9 (KKVYSFLKL) constitute a propeptide that is removed on maturation. Cystine bridges form between Cys12/Cys28, Cys19/Cys33, and Cys27/Cys43.

Belongs to the neurotoxin 01 (U2-agtx) family. As to expression, expressed by the venom gland.

The protein resides in the secreted. In terms of biological role, insect active toxin causing rapid but reversible paralysis in crickets. No activity shown in mammals. Does not show effect on mammalian voltage-gated calcium channels. The sequence is that of U2-agatoxin-Ao1s from Agelena orientalis (Funnel-web spider).